A 107-amino-acid chain; its full sequence is Class I hydrophobin 3 (107 aa).

The signal sequence occupies residues 1–18 (MQFKVLAALVIGATLAAA). Disulfide bonds link C26–C86, C33–C80, C34–C67, and C87–C100. N-linked (GlcNAc...) asparagine glycosylation is found at N35 and N89.

It belongs to the fungal hydrophobin family. As to quaternary structure, self-assembles to form functional amyloid fibrils called rodlets. Self-assembly into fibrillar rodlets occurs spontaneously at hydrophobic:hydrophilic interfaces and the rodlets further associate laterally to form amphipathic monolayers.

The protein resides in the secreted. It is found in the cell wall. Functionally, aerial growth, conidiation, and dispersal of filamentous fungi in the environment rely upon a capability of their secreting small amphipathic proteins called hydrophobins (HPBs) with low sequence identity. Class I can self-assemble into an outermost layer of rodlet bundles on aerial cell surfaces, conferring cellular hydrophobicity that supports fungal growth, development and dispersal; whereas Class II form highly ordered films at water-air interfaces through intermolecular interactions but contribute nothing to the rodlet structure. Pnh3 is a class I hydrophobin that might be involved in the attachment of the hydrophilic wall of hyphae to the hydrophobic surface of wood under inorganic phosphate (Pi)-deficient conditions and enable the mycelium to degrade efficiently the components of wood and to acquire nutrients containing Pi. The chain is Class I hydrophobin 3 from Pholiota nameko.